The sequence spans 396 residues: Deoxyuridine 5'-triphosphate nucleotidohydrolase (396 aa).

Substrate-binding positions include 280 to 282 (RSS) and 380 to 381 (FG).

Belongs to the dUTPase family. Requires Mg(2+) as cofactor.

It catalyses the reaction dUTP + H2O = dUMP + diphosphate + H(+). Involved in nucleotide metabolism: produces dUMP, the immediate precursor of thymidine nucleotides and decreases the intracellular concentration of dUTP to avoid uracil incorporation into viral DNA. The sequence is that of Deoxyuridine 5'-triphosphate nucleotidohydrolase from Varicella-zoster virus (strain Dumas) (HHV-3).